Reading from the N-terminus, the 413-residue chain is Divalent metal cation transporter MntH (413 aa).

The next 11 helical transmembrane spans lie at 19–39, 46–66, 94–114, 122–142, 156–176, 196–216, 241–261, 290–310, 329–349, 350–370, and 389–409; these read LALM…GNFA, ASFG…AMLI, VWFY…AEFI, LVLG…TFLI, VIGG…IFSQ, AVFL…IYLH, IAMT…AAAF, IFGL…TLAG, AITM…TRIL, VMSQ…LLIF, and IGWA…VGSL.

The protein belongs to the NRAMP family.

The protein localises to the cell inner membrane. In terms of biological role, h(+)-stimulated, divalent metal cation uptake system. The protein is Divalent metal cation transporter MntH of Klebsiella pneumoniae subsp. pneumoniae (strain ATCC 700721 / MGH 78578).